The chain runs to 125 residues: Late histone H2A.1 (125 aa).

The span at 1–18 shows a compositional bias: basic residues; that stretch reads MSGRGKGKAKGTKSKTRS. The interval 1–21 is disordered; it reads MSGRGKGKAKGTKSKTRSSRA. S2 carries the post-translational modification N-acetylserine. S2 is subject to Phosphoserine. An N5-methylglutamine modification is found at Q104. K119 is covalently cross-linked (Glycyl lysine isopeptide (Lys-Gly) (interchain with G-Cter in ubiquitin)).

The protein belongs to the histone H2A family. In terms of assembly, the nucleosome is a histone octamer containing two molecules each of H2A, H2B, H3 and H4 assembled in one H3-H4 heterotetramer and two H2A-H2B heterodimers. The octamer wraps approximately 147 bp of DNA. Post-translationally, monoubiquitination of Lys-119 gives a specific tag for epigenetic transcriptional repression. Phosphorylation of Ser-2 directly represses transcription.

It localises to the nucleus. The protein localises to the chromosome. Functionally, core component of nucleosome. Nucleosomes wrap and compact DNA into chromatin, limiting DNA accessibility to the cellular machineries which require DNA as a template. Histones thereby play a central role in transcription regulation, DNA repair, DNA replication and chromosomal stability. DNA accessibility is regulated via a complex set of post-translational modifications of histones, also called histone code, and nucleosome remodeling. This chain is Late histone H2A.1, found in Psammechinus miliaris (Green sea urchin).